The following is a 485-amino-acid chain: Glutamyl-tRNA(Gln) amidotransferase subunit A (485 aa).

Active-site charge relay system residues include lysine 78 and serine 153. The Acyl-ester intermediate role is filled by serine 177.

Belongs to the amidase family. GatA subfamily. As to quaternary structure, heterotrimer of A, B and C subunits.

The enzyme catalyses L-glutamyl-tRNA(Gln) + L-glutamine + ATP + H2O = L-glutaminyl-tRNA(Gln) + L-glutamate + ADP + phosphate + H(+). Allows the formation of correctly charged Gln-tRNA(Gln) through the transamidation of misacylated Glu-tRNA(Gln) in organisms which lack glutaminyl-tRNA synthetase. The reaction takes place in the presence of glutamine and ATP through an activated gamma-phospho-Glu-tRNA(Gln). The polypeptide is Glutamyl-tRNA(Gln) amidotransferase subunit A (Trichlorobacter lovleyi (strain ATCC BAA-1151 / DSM 17278 / SZ) (Geobacter lovleyi)).